Here is a 2006-residue protein sequence, read N- to C-terminus: E3 ubiquitin-protein ligase PRT6 (2006 aa).

The segment at 119 to 189 adopts a UBR-type zinc-finger fold; that stretch reads GVCGSVWGQN…PDGFCSNHKG (71 aa). Disordered stretches follow at residues 1167-1186 and 1338-1380; these read LSSS…SDSV and DHQP…AGSD. Residues 1338-1348 show a composition bias toward basic and acidic residues; sequence DHQPHEAENCS. Residues 1349–1360 are compositionally biased toward polar residues; sequence EKNSVGGPSTLQ. Positions 1364–1377 are enriched in basic and acidic residues; sequence PDIRSRQTSRRPDA. Residues 1395–1440 form an RING-type; degenerate zinc finger; it reads CGHAVHQSCLERYLKSLKERSGRRTVFEGAHIVDLKKKEFLCPVCR.

It belongs to the E3 ubiquitin-protein ligase UBR1-like family.

The catalysed reaction is S-ubiquitinyl-[E2 ubiquitin-conjugating enzyme]-L-cysteine + [acceptor protein]-L-lysine = [E2 ubiquitin-conjugating enzyme]-L-cysteine + N(6)-ubiquitinyl-[acceptor protein]-L-lysine.. Its pathway is protein modification; protein ubiquitination. Functionally, ubiquitin protein ligase which is a component of the N-end rule pathway with arginine specificity, and functions with the arginyltransferases ATE1 and ATE2. Recognizes and binds to proteins bearing specific N-terminal residues that are destabilizing according to the N-end rule, leading to their ubiquitination and subsequent degradation. Does not participate in degradation of proteins with N-terminal Phe or Leu. The N-end rule pathway regulates seed after-ripening, seedling sugar sensitivity, seedling lipid breakdown, and abscisic acid (ABA) sensitivity of germination. The N-end rule pathway regulates various aspects of leaf and shoot development. Involved in the ubiquitination and subsequent degradation of RAP2-12, an activator of hypoxic gene expression. The ubiquitination occurs after the N-arginylation of RAP2-12 by ATE1 or ATE2 under aerobic conditions. The end-rule pathway plays a role in regulating the timing and amplitude of the immune response following infection with the bacterial pathogen Pseudomonas syringae pv tomato. Regulates the biosynthesis of plant-defense metabolites such as glucosinolates, and the biosynthesis and response to the phytohormone jasmonate (JA), which plays a key role in plant immunity. Controls the expression of specific defense-response genes, activates the synthesis pathway for the phytoalexin camalexin, and influences basal resistance to the hemibiotroph pathogen Pseudomonas syringae pv tomato. Coordinates the mobilization of seed storage reserves and regulates the abundance and activities of several proteases following seed germination. This chain is E3 ubiquitin-protein ligase PRT6, found in Arabidopsis thaliana (Mouse-ear cress).